The chain runs to 202 residues: Probable nicotinate-nucleotide adenylyltransferase (202 aa).

Belongs to the NadD family.

It carries out the reaction nicotinate beta-D-ribonucleotide + ATP + H(+) = deamido-NAD(+) + diphosphate. Its pathway is cofactor biosynthesis; NAD(+) biosynthesis; deamido-NAD(+) from nicotinate D-ribonucleotide: step 1/1. In terms of biological role, catalyzes the reversible adenylation of nicotinate mononucleotide (NaMN) to nicotinic acid adenine dinucleotide (NaAD). The polypeptide is Probable nicotinate-nucleotide adenylyltransferase (Clostridium perfringens (strain ATCC 13124 / DSM 756 / JCM 1290 / NCIMB 6125 / NCTC 8237 / Type A)).